Here is a 495-residue protein sequence, read N- to C-terminus: MDSKRAALESGDGPDAKRLDTTDDQDKEASGGDGSQVMLAKHVAPYTGHGCTPPMESYLFEPTPAGSQLLPWKTSVDLDNDAELEKPTSDKKPDTAKLSRRELAKMRREHTLRALALERELTNKPGQTPASEVLLVRFPDPEITAPMLAGLSKDIRDVVLPISVAPRYCLVHLKAGADVEATICDINRVRFGTGHLRAELKPFSDEEQAEFIDPCSLYVGNIPFNMTTSAIKAYFANAMRVDIGVLKREKRARYAFVRYASPDQTMEAFKELVDSPLNSRTLTVRYRRLRKRAGMPMVQCATSFQALQSPNGDDDNTDCKVISPPPLESIIISDSDNCSDSSGNGKEDGKRKKKINEQEREIEKLKRQMAEYGAIIKSLQFRQNSLEDTFIPDLTPKVEPSVNPTGCLLGSNAVHLMRDIKKECDYLGIPDPVPATKPTTQAQDDSQKKAKRSCFGRLFTGPFRRGTSAMKTADEYEKDDRLEELYAQLERDPDP.

A disordered region spans residues 1 to 51 (MDSKRAALESGDGPDAKRLDTTDDQDKEASGGDGSQVMLAKHVAPYTGHGC). Residues 215–289 (CSLYVGNIPF…RTLTVRYRRL (75 aa)) form the RRM domain. Residues 332 to 342 (ISDSDNCSDSS) are compositionally biased toward low complexity. 3 disordered regions span residues 332-358 (ISDS…INEQ), 432-451 (PVPA…KKAK), and 461-495 (GPFR…DPDP). The span at 345–358 (GKEDGKRKKKINEQ) shows a compositional bias: basic and acidic residues. The Bipartite nuclear localization signal motif lies at 351-367 (RKKKINEQEREIEKLKR). Positions 472–495 (TADEYEKDDRLEELYAQLERDPDP) are enriched in basic and acidic residues.

Interacts with Zeste. As to expression, weakly expressed in embryos. Expression increases during larval and pupal stages. In adults, it is predominantly expressed in males, while it is weakly expressed in females.

It is found in the nucleus. The protein resides in the chromosome. In terms of biological role, probable RNA-binding protein that specifically binds to the fourth chromosome and may bind an RNA that spreads the fourth chromosome. May be a reminiscence of X chromosome dosage compensation of ancestral Drosophila species in which the X and the fourth chromosomes are one single chromosome. This Drosophila melanogaster (Fruit fly) protein is Protein painting of fourth (Pof).